We begin with the raw amino-acid sequence, 185 residues long: Translocon-associated protein subunit gamma (185 aa).

M1 carries the N-acetylmethionine modification. The Lumenal portion of the chain corresponds to 1 to 27; it reads MAPKGGSKQQSEEDLLLQDFSRNLSAK. A phosphoserine mark is found at S7 and S11. Residues 28–48 form a helical membrane-spanning segment; the sequence is SSALFFGNAFIVSAIPIWLYW. The Cytoplasmic segment spans residues 49–54; it reads RIWHMD. The chain crosses the membrane as a helical span at residues 55 to 76; sequence LIQSAVLYSVMTLVSTYLVAFA. Over 77–135 the chain is Lumenal; it reads YKNVKFVLKHKVAQKREDAVSKEVTRKLSEADNRKMSRKEKDERILWKKNEVADYEATT. The residue at position 105 (S105) is a Phosphoserine. Residues 136–157 traverse the membrane as a helical segment; the sequence is FSIFYNNTLFLVLVIVASFFIL. The Cytoplasmic segment spans residues 158–163; that stretch reads KNFNPT. A helical transmembrane segment spans residues 164-184; it reads VNYILSISASSGLIALLSTGS.

This sequence belongs to the TRAP-gamma family. In terms of assembly, heterotetramer of TRAP-alpha, TRAP-beta, TRAP-delta and TRAP-gamma.

Its subcellular location is the endoplasmic reticulum membrane. TRAP proteins are part of a complex whose function is to bind calcium to the ER membrane and thereby regulate the retention of ER resident proteins. The sequence is that of Translocon-associated protein subunit gamma (Ssr3) from Mus musculus (Mouse).